Consider the following 82-residue polypeptide: Small ribosomal subunit protein bS16 (82 aa).

This sequence belongs to the bacterial ribosomal protein bS16 family.

This Klebsiella pneumoniae (strain 342) protein is Small ribosomal subunit protein bS16.